The following is a 270-amino-acid chain: Glutamate racemase (270 aa).

Residues 7 to 8 (DS) and 39 to 40 (YG) contribute to the substrate site. Cys-70 functions as the Proton donor/acceptor in the catalytic mechanism. 71–72 (NT) contributes to the substrate binding site. Cys-194 acts as the Proton donor/acceptor in catalysis. Residue 195 to 196 (TH) coordinates substrate.

The protein belongs to the aspartate/glutamate racemases family.

It carries out the reaction L-glutamate = D-glutamate. It participates in cell wall biogenesis; peptidoglycan biosynthesis. Functionally, provides the (R)-glutamate required for cell wall biosynthesis. In Cereibacter sphaeroides (strain ATCC 17025 / ATH 2.4.3) (Rhodobacter sphaeroides), this protein is Glutamate racemase.